A 455-amino-acid chain; its full sequence is Bifunctional protein GlmU (455 aa).

The tract at residues 1 to 230 (MSNRFAVILA…VEETLGVNDR (230 aa)) is pyrophosphorylase. UDP-N-acetyl-alpha-D-glucosamine contacts are provided by residues 9-12 (LAAG), Lys-23, Gln-73, and 78-79 (GT). Residue Asp-103 coordinates Mg(2+). Gly-140, Glu-155, Asn-170, and Asn-228 together coordinate UDP-N-acetyl-alpha-D-glucosamine. Asn-228 serves as a coordination point for Mg(2+). The tract at residues 231-251 (VALAQAEQVMKRRINEAWMRK) is linker. Residues 252–455 (GVTFIDPEQT…KEHYVTKKNN (204 aa)) form an N-acetyltransferase region. 2 residues coordinate UDP-N-acetyl-alpha-D-glucosamine: Arg-333 and Lys-351. The active-site Proton acceptor is the His-363. UDP-N-acetyl-alpha-D-glucosamine-binding residues include Tyr-366 and Asn-377. Residues 386-387 (NY), Ala-423, and Arg-440 contribute to the acetyl-CoA site.

The protein in the N-terminal section; belongs to the N-acetylglucosamine-1-phosphate uridyltransferase family. In the C-terminal section; belongs to the transferase hexapeptide repeat family. Homotrimer. Mg(2+) is required as a cofactor.

Its subcellular location is the cytoplasm. The enzyme catalyses alpha-D-glucosamine 1-phosphate + acetyl-CoA = N-acetyl-alpha-D-glucosamine 1-phosphate + CoA + H(+). The catalysed reaction is N-acetyl-alpha-D-glucosamine 1-phosphate + UTP + H(+) = UDP-N-acetyl-alpha-D-glucosamine + diphosphate. It participates in nucleotide-sugar biosynthesis; UDP-N-acetyl-alpha-D-glucosamine biosynthesis; N-acetyl-alpha-D-glucosamine 1-phosphate from alpha-D-glucosamine 6-phosphate (route II): step 2/2. It functions in the pathway nucleotide-sugar biosynthesis; UDP-N-acetyl-alpha-D-glucosamine biosynthesis; UDP-N-acetyl-alpha-D-glucosamine from N-acetyl-alpha-D-glucosamine 1-phosphate: step 1/1. Its pathway is bacterial outer membrane biogenesis; LPS lipid A biosynthesis. Functionally, catalyzes the last two sequential reactions in the de novo biosynthetic pathway for UDP-N-acetylglucosamine (UDP-GlcNAc). The C-terminal domain catalyzes the transfer of acetyl group from acetyl coenzyme A to glucosamine-1-phosphate (GlcN-1-P) to produce N-acetylglucosamine-1-phosphate (GlcNAc-1-P), which is converted into UDP-GlcNAc by the transfer of uridine 5-monophosphate (from uridine 5-triphosphate), a reaction catalyzed by the N-terminal domain. This is Bifunctional protein GlmU from Halalkalibacterium halodurans (strain ATCC BAA-125 / DSM 18197 / FERM 7344 / JCM 9153 / C-125) (Bacillus halodurans).